We begin with the raw amino-acid sequence, 352 residues long: 4-hydroxybenzaldehyde synthase, chloroplastic (352 aa).

Residue N122 is glycosylated (N-linked (GlcNAc...) asparagine). Disulfide bonds link C159-C199 and C190-C231. N247 carries an N-linked (GlcNAc...) asparagine glycan. C289 and C339 form a disulfide bridge. Residues H298 and N318 contribute to the active site.

It belongs to the peptidase C1 family. In terms of assembly, forms homodimers, homotrimers and homotetramers. In terms of tissue distribution, mainly expressed in pods, but also present in stems, roots, leaves and embryos (at protein level).

It localises to the plastid. The protein resides in the chloroplast. It carries out the reaction (E)-4-coumarate + H2O = 4-hydroxybenzaldehyde + acetate. It participates in aromatic compound metabolism; phenylpropanoid biosynthesis. Inhibited by ascorbate. Its function is as follows. Involved in the biosynthesis of vanillin (4-hydroxy-3-methoxy-benzaldehyde) and derivative natural products, key components of vanilla pods flavor. Catalyzes the conversion of (E)-4-coumarate to 4-hydroxybenzaldehyde, a vanillin precursor. Mediates the conversion of ferulic acid to 3-methoxy-4-hydroxybenzaldehyde with a very low efficiency. Cannot use cinnamic, caffeic, sinapic and o-coumaric acids as substrates. This is 4-hydroxybenzaldehyde synthase, chloroplastic from Vanilla planifolia (Vanilla).